The primary structure comprises 726 residues: Pyrroloquinoline quinone-dependent pyranose dehydrogenase (726 aa).

An N-terminal signal peptide occupies residues 1-18; sequence MRSSSLAWALGLVALANA. 2 residues coordinate heme b: methionine 83 and tyrosine 108. Cysteines 138 and 141 form a disulfide. N-linked (GlcNAc...) asparagine glycosylation occurs at asparagine 140. Residues arginine 181 and histidine 182 each contribute to the heme b site. A disordered region spans residues 211–242; that stretch reads PPLSGGAPTQPPTQQPPTTTAPPPPPPSSTFV. Over residues 219 to 238 the composition is skewed to pro residues; the sequence is TQPPTQQPPTTTAPPPPPPS. Residues cysteine 244 and cysteine 302 are joined by a disulfide bond. 4 residues coordinate pyrroloquinoline quinone: arginine 273, histidine 363, arginine 430, and asparagine 431. Ca(2+)-binding residues include serine 449 and aspartate 451. Cysteine 492 and cysteine 525 are joined by a disulfide. Pyrroloquinoline quinone is bound at residue histidine 539. An N-linked (GlcNAc...) asparagine glycan is attached at asparagine 551. 3 residues coordinate pyrroloquinoline quinone: histidine 560, tryptophan 563, and asparagine 564. Cysteine 611 and cysteine 619 are disulfide-bonded. Residue arginine 621 coordinates pyrroloquinoline quinone. Positions 659-678 are enriched in pro residues; that stretch reads ITQPPITTSPPTPTTPPVVQ. The interval 659-689 is disordered; that stretch reads ITQPPITTSPPTPTTPPVVQPPTTVAPPQAS. Residues 679–689 show a composition bias toward low complexity; sequence PPTTVAPPQAS. Positions 688–724 constitute a CBM1 domain; sequence ASQTLWGQCGGQGWTGPTLCPANSVCRESNQWYSQCV.

This sequence belongs to the sugar dehydrogenase AA12 family. It depends on Ca(2+) as a cofactor. Requires pyrroloquinoline quinone as cofactor. The cofactor is heme b.

The protein resides in the secreted. Pyrroloquinoline quinone (PPQ)-dependent oxidoreductase that catalyzes the oxidation of various sugars including L-galactose, L-gulose, D-talose, D-arabinose, D-lyxose, L-fucose and D-glucosone. Shows significant activity toward the reverse-chair conformation of pyranoses. Shows little or no activity toward abundant sugars such as D-glucose, D-fructose, cellobiose, as well L-xylose and L-glucose. This enzyme is able to direct electrical communication with electrodes, without artificial electron mediators, thus allowing direct electron transfer (DET)-type bioelectrocatalysis. Exhibits binding affinity for insoluble cellulose. PDH does not oxidize cello-oligosaccharides but is able to activate the C-1-oxidizing Neurospora crassa LPMO9F and the C-4-oxidizing Neurospora crassa LPMO9C thanks to the electron-tranfer activity of the cytochrome domain and the localization of PDH in the vicinity of the LPMO substrates by the CBM1 domain. The polypeptide is Pyrroloquinoline quinone-dependent pyranose dehydrogenase (Coprinopsis cinerea (strain Okayama-7 / 130 / ATCC MYA-4618 / FGSC 9003) (Inky cap fungus)).